Consider the following 546-residue polypeptide: MTPGEIRRLYFIVRTFLSYGLDELIPKMRITLPLRIWRRMLFWMPNRHKDKLLGERLRLALQELGPVWIKFGQMLSTRRDLFPPQIADQLALLQDRVAPFDGARAKQQIEEAMGNIPVETWFDDFDIKPLASASIAQVHTARLKENGKEIVIKVIRPDILPVIRADMKLIYRLARWVPRLLPDGRRLRPMEVVREYEKTLIDELNLLRESANAIQLRRNFENSPMLYVPEVYSDYCSQNMMVMERIYGIPVSDIVALENQGTNMKLLAERGVQVFFTQVFRDSFFHADMHPGNIFVSYEHPEDPKYIGIDCGIVGSLNKEDKRYLAENFIAFFNRDYRKVAELHVDSGWVPPDTNVEEFEFAIRTVCEPIFEKPLSEISFGHVLLNLFNTARRFNMEVQPQLVLLQKTLLYVEGVGRQLYPQLDLWKTAKPFLESWIKDQVGLPALVRSFKEKAPFWIEKMPEIPELIYDSLRHSKNLQHSMDKITRELQSNRVRQGQSRYLFGIGATLLLSGTLLLINRPDWQMMPAWLMAGGLVVWLIGWRKTR.

The region spanning 124–502 (DFDIKPLASA…RVRQGQSRYL (379 aa)) is the Protein kinase domain. Residues 130 to 138 (LASASIAQV) and Lys-153 contribute to the ATP site. The active-site Proton acceptor is the Asp-288. Helical transmembrane passes span 501 to 521 (YLFG…INRP) and 522 to 542 (DWQM…LIGW).

Belongs to the ABC1 family. UbiB subfamily.

The protein localises to the cell inner membrane. It participates in cofactor biosynthesis; ubiquinone biosynthesis [regulation]. Functionally, is probably a protein kinase regulator of UbiI activity which is involved in aerobic coenzyme Q (ubiquinone) biosynthesis. The chain is Probable protein kinase UbiB from Enterobacter sp. (strain 638).